The sequence spans 336 residues: F420-dependent glucose-6-phosphate dehydrogenase (336 aa).

A coenzyme F420-(gamma-Glu)n-binding site is contributed by Asp-39. His-40 functions as the Proton donor in the catalytic mechanism. Residues Thr-76 and 107 to 108 (TG) contribute to the coenzyme F420-(gamma-Glu)n site. Glu-109 functions as the Proton acceptor in the catalytic mechanism. Coenzyme F420-(gamma-Glu)n-binding positions include Asn-112, 177-178 (GG), and 180-181 (VV). Substrate-binding residues include Thr-195, Lys-198, Lys-259, and Arg-283.

Belongs to the F420-dependent glucose-6-phosphate dehydrogenase family. Homodimer.

It catalyses the reaction oxidized coenzyme F420-(gamma-L-Glu)(n) + D-glucose 6-phosphate + H(+) = 6-phospho-D-glucono-1,5-lactone + reduced coenzyme F420-(gamma-L-Glu)(n). Its function is as follows. Catalyzes the coenzyme F420-dependent oxidation of glucose 6-phosphate (G6P) to 6-phosphogluconolactone. Appears to have a role in resistance to oxidative stress, via its consumption of G6P that serves as a source of reducing power to combat oxidative stress in mycobacteria. Cannot use NAD, NADP, FAD or FMN instead of coenzyme F420 as an electron acceptor. Exhibits nearly no activity with D-mannose-6-phosphate or D-fructose-6-phosphate as substrate. This is F420-dependent glucose-6-phosphate dehydrogenase (fgd) from Mycolicibacterium smegmatis (strain ATCC 700084 / mc(2)155) (Mycobacterium smegmatis).